The chain runs to 93 residues: Small ribosomal subunit protein uS15c (93 aa).

Belongs to the universal ribosomal protein uS15 family. In terms of assembly, part of the 30S ribosomal subunit.

Its subcellular location is the plastid. The protein resides in the chloroplast. The polypeptide is Small ribosomal subunit protein uS15c (rps15) (Jasminum nudiflorum (Winter jasmine)).